A 149-amino-acid polypeptide reads, in one-letter code: UPF0336 protein CMM_2793 (149 aa).

The MaoC-like domain occupies 16–117 (APYLVGREKV…TVTKVATLGG (102 aa)).

This sequence belongs to the UPF0336 family.

The protein is UPF0336 protein CMM_2793 of Clavibacter michiganensis subsp. michiganensis (strain NCPPB 382).